A 995-amino-acid chain; its full sequence is S1 RNA-binding domain-containing protein 1 (995 aa).

Residues 23 to 78 (SFSELSSASEEDDKEDSAWEPQKKVPRSRKQPPPKESKPKRMPQVKKNAPQISDGS) form a disordered region. Lys-84 is covalently cross-linked (Glycyl lysine isopeptide (Lys-Gly) (interchain with G-Cter in SUMO2)). Positions 116–132 (TKRKCAAQPHAVRRTKK) are enriched in basic residues. Residues 116–164 (TKRKCAAQPHAVRRTKKLKVDEETSKASYLEGESNSSETPSTSTVWGGT) are disordered. Lys-134 participates in a covalent cross-link: Glycyl lysine isopeptide (Lys-Gly) (interchain with G-Cter in SUMO2). Over residues 146–159 (EGESNSSETPSTST) the composition is skewed to low complexity. Residues Lys-166, Lys-167, and Lys-183 each participate in a glycyl lysine isopeptide (Lys-Gly) (interchain with G-Cter in SUMO2) cross-link. Lys-185 participates in a covalent cross-link: Glycyl lysine isopeptide (Lys-Gly) (interchain with G-Cter in SUMO1); alternate. Lys-185 participates in a covalent cross-link: Glycyl lysine isopeptide (Lys-Gly) (interchain with G-Cter in SUMO2); alternate. Residues 258–288 (ADSLREVQQTLEELRAVAKKVHSTIQKIKKE) are a coiled coil. Position 861 is a phosphoserine (Ser-861). Residues 919 to 992 (GTVLTGKVEN…PRSRITLDLI (74 aa)) enclose the S1 motif domain. Lys-955 participates in a covalent cross-link: Glycyl lysine isopeptide (Lys-Gly) (interchain with G-Cter in SUMO2). A Phosphoserine modification is found at Ser-964.

This chain is S1 RNA-binding domain-containing protein 1 (SRBD1), found in Pongo abelii (Sumatran orangutan).